The primary structure comprises 1363 residues: Homeobox protein 13 (1363 aa).

The stretch at F15–N73 forms a coiled coil. Disordered stretches follow at residues Q66–P96, S120–S177, I308–G437, L621–Q731, H765–S818, S857–I911, Q1001–N1137, N1166–R1202, and I1270–S1341. The span at N73 to P96 shows a compositional bias: polar residues. Residues S132 to S147 are compositionally biased toward low complexity. The segment covering R148–S158 has biased composition (polar residues). Composition is skewed to low complexity over residues N159–S177 and S315–N326. The segment covering N327–R339 has biased composition (basic residues). Positions T348–I378 are enriched in low complexity. Polar residues predominate over residues L379–S393. 5 stretches are compositionally biased toward low complexity: residues K394–I408, N415–N426, N641–I693, H709–Q731, and Q770–N793. Residues Q738–N789 adopt a coiled-coil conformation. 2 stretches are compositionally biased toward polar residues: residues S794–S818 and S857–R883. Composition is skewed to low complexity over residues I889 to I911, Q1001 to F1031, and N1045 to N1063. Positions K1064–L1078 are enriched in basic and acidic residues. Polar residues predominate over residues P1081–L1095. Composition is skewed to low complexity over residues S1096–S1116, T1123–N1137, and N1166–N1177. Residues E1179–D1195 show a composition bias toward acidic residues. Positions K1198–N1261 form a DNA-binding region, homeobox. Residues S1275 to L1294 show a composition bias toward low complexity. Residues N1297–I1316 show a composition bias toward polar residues. The span at N1317–N1334 shows a compositional bias: low complexity.

It is found in the nucleus. In terms of biological role, putative transcription factor. The polypeptide is Homeobox protein 13 (hbx13) (Dictyostelium discoideum (Social amoeba)).